Here is a 277-residue protein sequence, read N- to C-terminus: tRNA pseudouridine synthase A (277 aa).

Asp-57 functions as the Nucleophile in the catalytic mechanism. Tyr-115 is a binding site for substrate.

This sequence belongs to the tRNA pseudouridine synthase TruA family. Homodimer.

The catalysed reaction is uridine(38/39/40) in tRNA = pseudouridine(38/39/40) in tRNA. In terms of biological role, formation of pseudouridine at positions 38, 39 and 40 in the anticodon stem and loop of transfer RNAs. This is tRNA pseudouridine synthase A from Nitratidesulfovibrio vulgaris (strain DSM 19637 / Miyazaki F) (Desulfovibrio vulgaris).